The sequence spans 400 residues: 1-deoxy-D-xylulose 5-phosphate reductoisomerase (400 aa).

Positions 17, 18, 19, 20, and 131 each coordinate NADPH. K132 serves as a coordination point for 1-deoxy-D-xylulose 5-phosphate. E133 is an NADPH binding site. Mn(2+) is bound at residue D157. S158, E159, S188, and H211 together coordinate 1-deoxy-D-xylulose 5-phosphate. A Mn(2+)-binding site is contributed by E159. Residue G217 coordinates NADPH. Residues S224, N229, K230, and E233 each coordinate 1-deoxy-D-xylulose 5-phosphate. E233 contacts Mn(2+).

Belongs to the DXR family. Mg(2+) serves as cofactor. Mn(2+) is required as a cofactor.

The catalysed reaction is 2-C-methyl-D-erythritol 4-phosphate + NADP(+) = 1-deoxy-D-xylulose 5-phosphate + NADPH + H(+). It functions in the pathway isoprenoid biosynthesis; isopentenyl diphosphate biosynthesis via DXP pathway; isopentenyl diphosphate from 1-deoxy-D-xylulose 5-phosphate: step 1/6. Functionally, catalyzes the NADPH-dependent rearrangement and reduction of 1-deoxy-D-xylulose-5-phosphate (DXP) to 2-C-methyl-D-erythritol 4-phosphate (MEP). The sequence is that of 1-deoxy-D-xylulose 5-phosphate reductoisomerase from Pseudomonas putida (strain ATCC 700007 / DSM 6899 / JCM 31910 / BCRC 17059 / LMG 24140 / F1).